Reading from the N-terminus, the 404-residue chain is Cysteine desulfurase IscS (404 aa).

Residues 75–76, asparagine 155, glutamine 183, and 203–205 contribute to the pyridoxal 5'-phosphate site; these read AT and TGH. Residue lysine 206 is modified to N6-(pyridoxal phosphate)lysine. Threonine 243 serves as a coordination point for pyridoxal 5'-phosphate. Catalysis depends on cysteine 328, which acts as the Cysteine persulfide intermediate. Cysteine 328 lines the [2Fe-2S] cluster pocket.

The protein belongs to the class-V pyridoxal-phosphate-dependent aminotransferase family. NifS/IscS subfamily. In terms of assembly, homodimer. Forms a heterotetramer with IscU, interacts with other sulfur acceptors. Requires pyridoxal 5'-phosphate as cofactor.

The protein resides in the cytoplasm. It carries out the reaction (sulfur carrier)-H + L-cysteine = (sulfur carrier)-SH + L-alanine. Its pathway is cofactor biosynthesis; iron-sulfur cluster biosynthesis. Its function is as follows. Master enzyme that delivers sulfur to a number of partners involved in Fe-S cluster assembly, tRNA modification or cofactor biosynthesis. Catalyzes the removal of elemental sulfur atoms from cysteine to produce alanine. Functions as a sulfur delivery protein for Fe-S cluster synthesis onto IscU, an Fe-S scaffold assembly protein, as well as other S acceptor proteins. This chain is Cysteine desulfurase IscS, found in Cronobacter sakazakii (strain ATCC BAA-894) (Enterobacter sakazakii).